The chain runs to 215 residues: tRNA (guanine-N(7)-)-methyltransferase (215 aa).

The S-adenosyl-L-methionine site is built by Asp43, Glu68, Asn95, and Asp121. Residue Asp121 is part of the active site. Substrate-binding residues include Lys125 and Asp157.

Belongs to the class I-like SAM-binding methyltransferase superfamily. TrmB family.

The catalysed reaction is guanosine(46) in tRNA + S-adenosyl-L-methionine = N(7)-methylguanosine(46) in tRNA + S-adenosyl-L-homocysteine. The protein operates within tRNA modification; N(7)-methylguanine-tRNA biosynthesis. In terms of biological role, catalyzes the formation of N(7)-methylguanine at position 46 (m7G46) in tRNA. This chain is tRNA (guanine-N(7)-)-methyltransferase, found in Trichormus variabilis (strain ATCC 29413 / PCC 7937) (Anabaena variabilis).